A 291-amino-acid chain; its full sequence is Nucleotide-binding protein LGAS_1315 (291 aa).

13–20 serves as a coordination point for ATP; it reads GMSGAGKT. 63-66 is a GTP binding site; that stretch reads DLRV.

The protein belongs to the RapZ-like family.

Displays ATPase and GTPase activities. This is Nucleotide-binding protein LGAS_1315 from Lactobacillus gasseri (strain ATCC 33323 / DSM 20243 / BCRC 14619 / CIP 102991 / JCM 1131 / KCTC 3163 / NCIMB 11718 / NCTC 13722 / AM63).